The chain runs to 245 residues: MTLTASSSSRAVTNSPVVVALDYHNRDDALSFVDKIDPRDCRLKVGKEMFTLFGPQFVRELQQRGFDIFLDLKFHDIPNTAAHAVAAAADLGVWMVNVHASGGARMMTAAREALVPFGKDAPLLIAVTVLTSMEASDLADLGVTLSPADYAERLAALTQKCGLDGVVCSAQEAVRFKQVFGQEFKLVTPGIRPQGSDAGDQRRIMTPEQALAAGVDYMAIGRPVTQSVDPAQTLKAINASLQRSA.

Substrate is bound by residues D22, K44, 71-80 (DLKFHDIPNT), T131, R192, Q201, G221, and R222. The active-site Proton donor is K73.

Belongs to the OMP decarboxylase family. Type 1 subfamily. Homodimer.

The catalysed reaction is orotidine 5'-phosphate + H(+) = UMP + CO2. The protein operates within pyrimidine metabolism; UMP biosynthesis via de novo pathway; UMP from orotate: step 2/2. Catalyzes the decarboxylation of orotidine 5'-monophosphate (OMP) to uridine 5'-monophosphate (UMP). This chain is Orotidine 5'-phosphate decarboxylase, found in Shigella boydii serotype 18 (strain CDC 3083-94 / BS512).